Consider the following 227-residue polypeptide: H-2 class II histocompatibility antigen, A-U alpha chain (227 aa).

Positions 1 to 82 (DHVGSYGIVV…KRSNSTPATN (82 aa)) are alpha-1. At 1–189 (DHVGSYGIVV…IPAPMSELTE (189 aa)) the chain is on the extracellular side. Residues 83-176 (EAPQATVFPK…GLEEPVLKHW (94 aa)) form an alpha-2 region. The Ig-like C1-type domain occupies 85 to 177 (PQATVFPKSP…LEEPVLKHWE (93 aa)). Cys-105 and Cys-161 are disulfide-bonded. A glycan (N-linked (GlcNAc...) asparagine) is linked at Asn-116. Residues 177–189 (EPEIPAPMSELTE) form a connecting peptide region. The chain crosses the membrane as a helical span at residues 190–215 (TVVCALGLSVGLVGIVVGTIFIIQGL). Residues 216 to 227 (RSGGTSRHPGPL) are Cytoplasmic-facing.

It belongs to the MHC class II family.

The protein resides in the membrane. This chain is H-2 class II histocompatibility antigen, A-U alpha chain (H2-Aa), found in Mus musculus (Mouse).